We begin with the raw amino-acid sequence, 150 residues long: Large ribosomal subunit protein uL13 (150 aa).

The protein belongs to the universal ribosomal protein uL13 family. Part of the 50S ribosomal subunit.

In terms of biological role, this protein is one of the early assembly proteins of the 50S ribosomal subunit, although it is not seen to bind rRNA by itself. It is important during the early stages of 50S assembly. This chain is Large ribosomal subunit protein uL13, found in Sulfurihydrogenibium sp. (strain YO3AOP1).